The sequence spans 226 residues: Endonuclease NucS (226 aa).

This sequence belongs to the NucS endonuclease family.

The protein resides in the cytoplasm. Cleaves both 3' and 5' ssDNA extremities of branched DNA structures. The chain is Endonuclease NucS from Mycobacterium tuberculosis (strain ATCC 25618 / H37Rv).